The primary structure comprises 349 residues: Glycerol-3-phosphate dehydrogenase [NAD(P)+] (349 aa).

Positions 20, 43, 44, and 117 each coordinate NADPH. Positions 117 and 147 each coordinate sn-glycerol 3-phosphate. An NADPH-binding site is contributed by alanine 151. The sn-glycerol 3-phosphate site is built by lysine 202, aspartate 255, serine 265, arginine 266, and asparagine 267. Lysine 202 (proton acceptor) is an active-site residue. Residue arginine 266 coordinates NADPH. Positions 297 and 299 each coordinate NADPH.

Belongs to the NAD-dependent glycerol-3-phosphate dehydrogenase family.

The protein resides in the cytoplasm. It catalyses the reaction sn-glycerol 3-phosphate + NAD(+) = dihydroxyacetone phosphate + NADH + H(+). It carries out the reaction sn-glycerol 3-phosphate + NADP(+) = dihydroxyacetone phosphate + NADPH + H(+). It functions in the pathway membrane lipid metabolism; glycerophospholipid metabolism. Its function is as follows. Catalyzes the reduction of the glycolytic intermediate dihydroxyacetone phosphate (DHAP) to sn-glycerol 3-phosphate (G3P), the key precursor for phospholipid synthesis. The chain is Glycerol-3-phosphate dehydrogenase [NAD(P)+] from Mycobacterium leprae (strain TN).